The chain runs to 417 residues: Carboxypeptidase A2 (417 aa).

The N-terminal stretch at 1 to 16 (MRLTLLLAALLGYIYC) is a signal peptide. Positions 17 to 112 (QETFVGDQVL…EMLFNQQRER (96 aa)) are cleaved as a propeptide — activation peptide. The Peptidase M14 domain maps to 120–412 (AYHTLEEIYQ…LGLKTIMEHV (293 aa)). Zn(2+) contacts are provided by H177 and E180. Substrate-binding positions include 177–180 (HARE), R235, and 252–253 (NR). Residues C246 and C269 are joined by a disulfide bond. H304 is a binding site for Zn(2+). 305 to 306 (SY) serves as a coordination point for substrate. An intrachain disulfide couples C318 to C352. A substrate-binding site is contributed by Y356. The active-site Proton donor/acceptor is E378.

Belongs to the peptidase M14 family. The cofactor is Zn(2+).

It is found in the secreted. It carries out the reaction Similar to that of carboxypeptidase A (EC 3.4.17.1), but with a preference for bulkier C-terminal residues.. In terms of biological role, carboxypeptidase that catalyzes the release of a C-terminal amino acid, with a preference for large aromatic C-terminal residues. This is Carboxypeptidase A2 (Cpa2) from Rattus norvegicus (Rat).